A 799-amino-acid chain; its full sequence is Ribonucleoside-diphosphate reductase large subunit (799 aa).

Substrate is bound by residues threonine 192, 207 to 208, glycine 238, 408 to 412, and 612 to 616; these read SC, NLCAE, and PTAGT. A disulfide bridge links cysteine 208 with cysteine 424. Asparagine 408 acts as the Proton acceptor in catalysis. Cysteine 410 functions as the Cysteine radical intermediate in the catalytic mechanism. Glutamate 412 functions as the Proton acceptor in the catalytic mechanism. Residues 765–799 form a disordered region; it reads PDSGDGVGGYKGGDEEPRSPEHAQCESPDRCLSCQ. Basic and acidic residues predominate over residues 776–793; it reads GGDEEPRSPEHAQCESPD.

It belongs to the ribonucleoside diphosphate reductase large chain family. As to quaternary structure, heterotetramer composed of a homodimer of the large subunit (R1) and a homodimer of the small subunit (R2). Larger multisubunit protein complex are also active, composed of (R1)n(R2)n.

The enzyme catalyses a 2'-deoxyribonucleoside 5'-diphosphate + [thioredoxin]-disulfide + H2O = a ribonucleoside 5'-diphosphate + [thioredoxin]-dithiol. In terms of biological role, ribonucleoside-diphosphate reductase holoenzyme provides the precursors necessary for viral DNA synthesis. Allows virus growth in non-dividing cells, as well as reactivation from latency in infected hosts. Catalyzes the biosynthesis of deoxyribonucleotides from the corresponding ribonucleotides. In Equine herpesvirus 2 (strain 86/87) (EHV-2), this protein is Ribonucleoside-diphosphate reductase large subunit.